The sequence spans 203 residues: Recombination protein RecR (203 aa).

The segment at 56-71 (CAVCGNVSDDERCRIC) adopts a C4-type zinc-finger fold. One can recognise a Toprim domain in the interval 79–179 (ALVCVVEEPK…TVTRIASGLP (101 aa)).

The protein belongs to the RecR family.

In terms of biological role, may play a role in DNA repair. It seems to be involved in an RecBC-independent recombinational process of DNA repair. It may act with RecF and RecO. The protein is Recombination protein RecR of Mycobacterium ulcerans (strain Agy99).